Reading from the N-terminus, the 1018-residue chain is Integrator complex subunit 5 (1018 aa).

Residues 1-26 (MSALCDPPGAPGPPGPAPATHGPAPL) are disordered. The residue at position 2 (serine 2) is an N-acetylserine. Pro residues predominate over residues 8–17 (PGAPGPPGPA). Serine 278 is modified (phosphoserine). A run of 3 helical transmembrane segments spans residues 533 to 553 (LATQLYAGLVVSLSGLLPLAF), 855 to 875 (LLFELLKLVAAAPPALCYCSV), and 929 to 949 (VFSQLAPFEVRLLLLSVWGFL).

This sequence belongs to the Integrator subunit 5 family. In terms of assembly, component of the Integrator complex, composed of core subunits INTS1, INTS2, INTS3, INTS4, INTS5, INTS6, INTS7, INTS8, INTS9/RC74, INTS10, INTS11/CPSF3L, INTS12, INTS13, INTS14 and INTS15. The core complex associates with protein phosphatase 2A subunits PPP2CA and PPP2R1A, to form the Integrator-PP2A (INTAC) complex.

The protein resides in the nucleus. It localises to the cytoplasm. It is found in the nucleus membrane. Component of the integrator complex, a multiprotein complex that terminates RNA polymerase II (Pol II) transcription in the promoter-proximal region of genes. The integrator complex provides a quality checkpoint during transcription elongation by driving premature transcription termination of transcripts that are unfavorably configured for transcriptional elongation: the complex terminates transcription by (1) catalyzing dephosphorylation of the C-terminal domain (CTD) of Pol II subunit POLR2A/RPB1 and SUPT5H/SPT5, (2) degrading the exiting nascent RNA transcript via endonuclease activity and (3) promoting the release of Pol II from bound DNA. The integrator complex is also involved in terminating the synthesis of non-coding Pol II transcripts, such as enhancer RNAs (eRNAs), small nuclear RNAs (snRNAs), telomerase RNAs and long non-coding RNAs (lncRNAs). Mediates recruitment of cytoplasmic dynein to the nuclear envelope, probably as component of the integrator complex. The polypeptide is Integrator complex subunit 5 (Ints5) (Mus musculus (Mouse)).